Reading from the N-terminus, the 458-residue chain is UDP-N-acetylmuramate--L-alanine ligase (458 aa).

118–124 (GTHGKTT) contributes to the ATP binding site.

The protein belongs to the MurCDEF family.

It localises to the cytoplasm. The catalysed reaction is UDP-N-acetyl-alpha-D-muramate + L-alanine + ATP = UDP-N-acetyl-alpha-D-muramoyl-L-alanine + ADP + phosphate + H(+). It functions in the pathway cell wall biogenesis; peptidoglycan biosynthesis. In terms of biological role, cell wall formation. This Clostridium botulinum (strain Loch Maree / Type A3) protein is UDP-N-acetylmuramate--L-alanine ligase.